A 380-amino-acid polypeptide reads, in one-letter code: Probable tRNA sulfurtransferase (380 aa).

Positions 58–162 constitute a THUMP domain; sequence EEVIERLKKV…MAFVYAGVIE (105 aa). ATP is bound by residues 178-179, 203-204, arginine 260, glycine 282, and glutamine 291; these read LL and YF.

It belongs to the ThiI family.

The protein resides in the cytoplasm. The catalysed reaction is [ThiI sulfur-carrier protein]-S-sulfanyl-L-cysteine + a uridine in tRNA + 2 reduced [2Fe-2S]-[ferredoxin] + ATP + H(+) = [ThiI sulfur-carrier protein]-L-cysteine + a 4-thiouridine in tRNA + 2 oxidized [2Fe-2S]-[ferredoxin] + AMP + diphosphate. It catalyses the reaction [ThiS sulfur-carrier protein]-C-terminal Gly-Gly-AMP + S-sulfanyl-L-cysteinyl-[cysteine desulfurase] + AH2 = [ThiS sulfur-carrier protein]-C-terminal-Gly-aminoethanethioate + L-cysteinyl-[cysteine desulfurase] + A + AMP + 2 H(+). It participates in cofactor biosynthesis; thiamine diphosphate biosynthesis. Catalyzes the ATP-dependent transfer of a sulfur to tRNA to produce 4-thiouridine in position 8 of tRNAs, which functions as a near-UV photosensor. Also catalyzes the transfer of sulfur to the sulfur carrier protein ThiS, forming ThiS-thiocarboxylate. This is a step in the synthesis of thiazole, in the thiamine biosynthesis pathway. The sulfur is donated as persulfide by IscS. This chain is Probable tRNA sulfurtransferase, found in Thermoanaerobacter pseudethanolicus (strain ATCC 33223 / 39E) (Clostridium thermohydrosulfuricum).